A 1254-amino-acid chain; its full sequence is Juxtamembrane domain-associated catenin (1254 aa).

3 disordered regions span residues 1–38 (MISS…TMRK), 84–106 (AGPT…DNPP), and 145–209 (PYSN…SAPG). Over residues 12 to 22 (PIPEEGTEADG) the composition is skewed to acidic residues. Positions 145–157 (PYSNIDFDSSGLP) are enriched in polar residues. Fibronectin type-III domains lie at 207–302 (APGV…IPIS), 315–411 (APGR…IRPA), 428–518 (PPGQ…LRPT), and 530–624 (ILEA…IEPS). The interval 412-433 (APQRHVPARKVSESVQPPGQPQ) is disordered. The interval 662–685 (MVRESPPLPERDDSPPPLRRANNN) is disordered. 5 ARM repeats span residues 733-775 (GGIP…AVME), 777-820 (DGVR…ESAT), 874-922 (NLIE…YDPA), 969-1012 (HVVK…RAAV), and 1016-1058 (KGLP…KYAL). A disordered region spans residues 920-960 (DPAAAHSSSSKNMKHVASPKPEKKKKDKEKKKDKNPKNIVT). The interval 1159 to 1254 (GTARRGDSST…GGGNIDDSWV (96 aa)) is disordered. Over residues 1166–1176 (SSTLARPISSQ) the composition is skewed to polar residues. A compositionally biased stretch (basic and acidic residues) spans 1177 to 1187 (GRERPSMHQLD).

It belongs to the beta-catenin family. Associated with the catenin-cadherin complex consisting of hmr-1, hmp-1 and hmp-2. Interacts with hmr-1. Interacts with picc-1. In terms of tissue distribution, epidermal cells.

The protein resides in the cell junction. The protein localises to the adherens junction. It is found in the nucleus. Functionally, may act as a positive modulator of hmr-1 function during epidermal morphogenesis. Required for proper localization of other junctional components, such as pac-1. The protein is Juxtamembrane domain-associated catenin (jac-1) of Caenorhabditis elegans.